Reading from the N-terminus, the 214-residue chain is MDRVSSLPDELLCHILSFLTTKETALTSLLSKREIIPLIKSVVFPTLIYASFLVQLVSKLVKLKIGSGIDLCWWTESIFLPMLKTLVLDSVEFCVARFEILFPACPALEELEMANIKVLDSDATVSSASLKTLKIDSSVGSGSFSFDTPNLVYLGYSDFVAEDYPLANFQNLFEARINLVVTKDQIERARAPNNGWLEDDEDDIALRLGIRKSS.

Residues 1 to 47 form the F-box domain; sequence MDRVSSLPDELLCHILSFLTTKETALTSLLSKREIIPLIKSVVFPTL.

The protein is Putative F-box protein At3g58910 of Arabidopsis thaliana (Mouse-ear cress).